The chain runs to 1067 residues: Eukaryotic translation initiation factor 3 subunit A (1067 aa).

Positions 92 to 121 (LKKFIELAEKKVTEAQAKADEIQSSLESAA) form a coiled coil. Residues 339-523 (MTKAASFVLL…GVLTFDTDIF (185 aa)) form the PCI domain. Residues 608–899 (RVLIEKKKEA…QKQREEEAEA (292 aa)) are a coiled coil. Composition is skewed to basic and acidic residues over residues 617 to 632 (AATDALQRKQREEETR), 642 to 665 (EAEKQRLLDEQREREKKRLKDEQD), 795 to 901 (EVSE…EARR), and 916 to 926 (AEPERPAERTA). Disordered regions lie at residues 617–665 (AATD…DEQD) and 795–1067 (EVSE…QQQQ). Low complexity-rich tracts occupy residues 965–976 (AAPAAAPAPAAE) and 1025–1046 (SSSSQPPSRTQTPPAPAAAASS).

This sequence belongs to the eIF-3 subunit A family. In terms of assembly, component of the eukaryotic translation initiation factor 3 (eIF-3) complex.

It localises to the cytoplasm. RNA-binding component of the eukaryotic translation initiation factor 3 (eIF-3) complex, which is involved in protein synthesis of a specialized repertoire of mRNAs and, together with other initiation factors, stimulates binding of mRNA and methionyl-tRNAi to the 40S ribosome. The eIF-3 complex specifically targets and initiates translation of a subset of mRNAs involved in cell proliferation. This chain is Eukaryotic translation initiation factor 3 subunit A (tif32), found in Neosartorya fischeri (strain ATCC 1020 / DSM 3700 / CBS 544.65 / FGSC A1164 / JCM 1740 / NRRL 181 / WB 181) (Aspergillus fischerianus).